A 307-amino-acid chain; its full sequence is 2-dehydropantoate 2-reductase (307 aa).

Residues 7-12 (GSGAMG), Asn-102, and Ala-128 contribute to the NADP(+) site. Asn-102 contributes to the substrate binding site. Lys-184 serves as the catalytic Proton donor. Substrate is bound by residues Asn-188, Asn-192, and Ser-255. Glu-268 contributes to the NADP(+) binding site.

This sequence belongs to the ketopantoate reductase family.

Its subcellular location is the cytoplasm. It catalyses the reaction (R)-pantoate + NADP(+) = 2-dehydropantoate + NADPH + H(+). Its pathway is cofactor biosynthesis; (R)-pantothenate biosynthesis; (R)-pantoate from 3-methyl-2-oxobutanoate: step 2/2. Catalyzes the NADPH-dependent reduction of ketopantoate into pantoic acid. The sequence is that of 2-dehydropantoate 2-reductase (apbA) from Streptococcus pyogenes serotype M6 (strain ATCC BAA-946 / MGAS10394).